A 222-amino-acid polypeptide reads, in one-letter code: Germin-like protein subfamily 1 member 4 (222 aa).

A signal peptide spans M1–C24. An intrachain disulfide couples C34 to C50. The N-linked (GlcNAc...) asparagine glycan is linked to N38. The Cupin type-1 domain occupies S64–K215. 2 residues coordinate Mn(2+): H112 and H114. An N-linked (GlcNAc...) asparagine glycan is attached at N139. H161 is a Mn(2+) binding site.

It belongs to the germin family. Oligomer (believed to be a pentamer but probably hexamer).

It localises to the secreted. Its subcellular location is the extracellular space. It is found in the apoplast. Its function is as follows. May play a role in plant defense. Probably has no oxalate oxidase activity even if the active site is conserved. In Arabidopsis thaliana (Mouse-ear cress), this protein is Germin-like protein subfamily 1 member 4.